The primary structure comprises 826 residues: Dolichyl-diphosphooligosaccharide--protein glycosyltransferase subunit STT3B (826 aa).

The segment at 1–60 is disordered; that stretch reads MAEPSAPESKHKSSLNSSPWSGLMALGNSRHGHHGPGAQCAHKAAGGVAPPKPAPAGLSG. Residue A2 is modified to N-acetylalanine. The Cytoplasmic portion of the chain corresponds to 2–41; it reads AEPSAPESKHKSSLNSSPWSGLMALGNSRHGHHGPGAQCA. Phosphoserine is present on residues S13, S18, and S29. The chain crosses the membrane as a helical span at residues 42 to 86; it reads HKAAGGVAPPKPAPAGLSGGLSQPAGWQSLLSFTILFLAWLAGFS. At 87–173 the chain is on the lumenal side; it reads SRLFAVIRFE…VHIRDVCVFL (87 aa). Residues 101–103 carry the DXD motif 1 motif; it reads EFD. D103 is a binding site for Mn(2+). A helical membrane pass occupies residues 174–192; the sequence is APTFSGLTSISTFLLTREL. Topologically, residues 193–194 are cytoplasmic; the sequence is WN. The helical transmembrane segment at 195 to 212 threads the bilayer; that stretch reads QGAGLLAACFIAIVPGYI. Topologically, residues 213–223 are lumenal; it reads SRSVAGSFDNE. Residues D221 and E223 each coordinate Mn(2+). The DXD motif 2 motif lies at 221 to 223; the sequence is DNE. Residues 224-243 traverse the membrane as a helical segment; that stretch reads GIAIFALQFTYYLWVKSVKT. At 244-245 the chain is on the cytoplasmic side; the sequence is GS. A helical membrane pass occupies residues 246–260; that stretch reads VFWTMCCCLSYFYMV. Residues 261 to 265 lie on the Lumenal side of the membrane; sequence SAWGG. A helical membrane pass occupies residues 266–282; it reads YVFIINLIPLHVFVLLL. The Cytoplasmic segment spans residues 283-287; it reads MQRYS. Residues 288–313 form a helical membrane-spanning segment; it reads KRVYIAYSTFYIVGLILSMQIPFVGF. The Lumenal portion of the chain corresponds to 314-321; sequence QPIRTSEH. A helical membrane pass occupies residues 322 to 341; it reads MAAAGVFALLQAYAFLQYLR. The Cytoplasmic segment spans residues 342 to 350; sequence DRLTKQEFQ. The helical transmembrane segment at 351 to 371 threads the bilayer; the sequence is TLFFLGVSLAAGAVFLSVIYL. The Lumenal segment spans residues 372-410; that stretch reads TYTGYIAPWSGRFYSLWDTGYAKIHIPIIASVSEHQPTT. The short motif at 402 to 405 is the SVSE motif element; it reads SVSE. A helical transmembrane segment spans residues 411–433; the sequence is WVSFFFDLHILVCTFPAGLWFCI. Topologically, residues 434-439 are cytoplasmic; that stretch reads KNINDE. The helical transmembrane segment at 440 to 456 threads the bilayer; the sequence is RVFVALYAISAVYFAGV. Topologically, residues 457–460 are lumenal; sequence MVRL. Residue R459 participates in dolichyl diphosphooligosaccharide binding. The helical transmembrane segment at 461 to 482 threads the bilayer; that stretch reads MLTLTPVVCMLSAIAFSNVFEH. Over 483-526 the chain is Cytoplasmic; the sequence is YLGDDMKRENPPVEDSSDEDDKRNPGNLYDKAGKVRKHVTEQEK. The interval 490 to 512 is disordered; the sequence is RENPPVEDSSDEDDKRNPGNLYD. Residues S498 and S499 each carry the phosphoserine modification. The chain crosses the membrane as a helical span at residues 527–552; that stretch reads TEEGLGPNIKSIVTMLMLMLLMMFAV. At 553–826 the chain is on the lumenal side; the sequence is HCTWVTSNAY…KGKKISKKTV (274 aa). Residues 604-606 are interacts with target acceptor peptide in protein substrate; the sequence is WWD. Residues 604-608 carry the WWDYG motif motif; sequence WWDYG. Y609 serves as a coordination point for dolichyl diphosphooligosaccharide. N616 and N623 each carry an N-linked (GlcNAc...) asparagine glycan. N-linked (GlcNAc...) (high mannose) asparagine glycosylation is present at N627. A glycan (N-linked (GlcNAc...) asparagine) is linked at N641. The DK motif motif lies at 671-678; it reads DINKFLWM.

It belongs to the STT3 family. Component of the oligosaccharyltransferase (OST) complex. There are 2 OST complexes, OST-A and OST-B, which contain STT3A or STT3B as catalytic subunit, respectively. OST-A and OST-B contain common core subunits RPN1, RPN2, OST48, OST4, DAD1 and TMEM258, and OST-B contains either MAGT1 or TUSC3 as specific accessory subunit. Mg(2+) is required as a cofactor. The cofactor is Mn(2+).

It localises to the endoplasmic reticulum. The protein resides in the endoplasmic reticulum membrane. It catalyses the reaction a di-trans,poly-cis-dolichyl diphosphooligosaccharide + L-asparaginyl-[protein] = N(4)-(oligosaccharide-(1-&gt;4)-N-acetyl-beta-D-glucosaminyl-(1-&gt;4)-N-acetyl-beta-D-glucosaminyl)-L-asparaginyl-[protein] + a di-trans,poly-cis-dolichyl diphosphate + H(+). The protein operates within protein modification; protein glycosylation. In terms of biological role, catalytic subunit of the oligosaccharyl transferase (OST) complex that catalyzes the initial transfer of a defined glycan (Glc(3)Man(9)GlcNAc(2) in eukaryotes) from the lipid carrier dolichol-pyrophosphate to an asparagine residue within an Asn-X-Ser/Thr consensus motif in nascent polypeptide chains, the first step in protein N-glycosylation. N-glycosylation occurs cotranslationally and the complex associates with the Sec61 complex at the channel-forming translocon complex that mediates protein translocation across the endoplasmic reticulum (ER). All subunits are required for a maximal enzyme activity. This subunit contains the active site and the acceptor peptide and donor lipid-linked oligosaccharide (LLO) binding pockets. STT3B is present in a small subset of OST complexes and mediates both cotranslational and post-translational N-glycosylation of target proteins: STT3B-containing complexes are required for efficient post-translational glycosylation and while they are less competent than STT3A-containing complexes for cotranslational glycosylation, they have the ability to mediate glycosylation of some nascent sites that are not accessible for STT3A. STT3B-containing complexes also act post-translationally and mediate modification of skipped glycosylation sites in unfolded proteins. Plays a role in ER-associated degradation (ERAD) pathway that mediates ubiquitin-dependent degradation of misfolded endoplasmic reticulum proteins by mediating N-glycosylation of unfolded proteins, which are then recognized by the ERAD pathway and targeted for degradation. The sequence is that of Dolichyl-diphosphooligosaccharide--protein glycosyltransferase subunit STT3B from Canis lupus familiaris (Dog).